A 458-amino-acid polypeptide reads, in one-letter code: MLKLIIPSIMLIPMTFLINKKSLLWTATTFFSFLIAALSTLTLNMDVAEHNSTNPLLSIDQFSCPLIMLSCWLLPLTIMGSQAHMKTEPITRQKTMISLLILLQVLLCITFGASNLLMFYIAFETTLIPTLLIITRWGNQKERLTAGLYFLFYTLSASLPLLLALIMIQTHLNSLSIYIIPLSNLTLLLNTPWSETLWWIACFLAFLIKMPLYIFHLWLPKAHVEAPIAGSMILAAILLKLGGYGMIRMSSLFIPLTKDLAVPFMIIAMWGMIVTSSICLRQTDLKSMIAYSSVSHMGLVVAGIFTMTPWAWSGALAMMIAHGLVSSGLLCLANITYERTHTRSIFMNRGLKTLFPLMSFWWLMMTFANMALPPFPNFMAEILIITSLFNWSNWTILLLGLSMTLTALFSLNMLIMTQHEHPNKHAPVNPSTTREHLLMLMHMAPIILLIANPSAIMI.

Helical transmembrane passes span 23–43 (LLWTATTFFSFLIAALSTLTL), 59–79 (IDQFSCPLIMLSCWLLPLTIM), 99–119 (LLILLQVLLCITFGASNLLMF), 148–168 (LYFLFYTLSASLPLLLALIMI), 174–194 (SLSIYIIPLSNLTLLLNTPWS), 197–217 (LWWIACFLAFLIKMPLYIFHL), 227–247 (PIAGSMILAAILLKLGGYGMI), 260–280 (LAVPFMIIAMWGMIVTSSICL), 289–311 (IAYSSVSHMGLVVAGIFTMTPWA), 315–337 (ALAMMIAHGLVSSGLLCLANITY), 355–375 (FPLMSFWWLMMTFANMALPPF), 396–416 (ILLLGLSMTLTALFSLNMLIM), and 438–458 (LMLMHMAPIILLIANPSAIMI).

It belongs to the complex I subunit 4 family.

The protein localises to the mitochondrion membrane. It carries out the reaction a ubiquinone + NADH + 5 H(+)(in) = a ubiquinol + NAD(+) + 4 H(+)(out). In terms of biological role, core subunit of the mitochondrial membrane respiratory chain NADH dehydrogenase (Complex I) that is believed to belong to the minimal assembly required for catalysis. Complex I functions in the transfer of electrons from NADH to the respiratory chain. The immediate electron acceptor for the enzyme is believed to be ubiquinone. The chain is NADH-ubiquinone oxidoreductase chain 4 (MT-ND4) from Petromyzon marinus (Sea lamprey).